Here is a 225-residue protein sequence, read N- to C-terminus: PKHD-type hydroxylase YbiX (225 aa).

Residues Thr78 to Ser177 enclose the Fe2OG dioxygenase domain. Fe cation-binding residues include His96, Asp98, and His158. Residue Arg168 participates in 2-oxoglutarate binding.

It depends on Fe(2+) as a cofactor. L-ascorbate serves as cofactor.

The chain is PKHD-type hydroxylase YbiX from Escherichia coli O6:K15:H31 (strain 536 / UPEC).